Reading from the N-terminus, the 1235-residue chain is MGLNIPEKPVNTLWTDDQWKAIQANGNNILVAAAAGSGKTAVLVTRIIEKLVDETGNLNVDELLIVTFTNASAAEMKYRIGKSLEEALSQNPDSSHLKKQVALLNYASISTLHSFCLEIIRKHYFEADIDPNFRLIEPIESSMIRDEVLEELLEKEYSIANNEAFFHLVESFTGDRTDAELHMLISKLYDFSRANPNPDLWLEQMVNFYDTKDINSITELPYFPIIKEDIELRINQAKSYLLNAIEYASENNGPAPYLETLENDLAQINTLSNISWTNWQDVKLRVESMDFKRIPSLKNKSDYDEEYVEETKRFRDAAKKEIKNVLVDWFSREETNYLADLEKMKPDIKTISELVKNFANNFFEEKQRRGVLDFNDLEHLALKILLKNDVPSDVAKSYQKQFKEVLIDEYQDTNMVQETILLLVTNSEESKGNLFMVGDVKQSIYRFRLAEPTLFMTKYQEYQQNGEGEGIRIDLSQNFRSRKEVLDATNFIFHQLMDKHVAEIDYDEAAELTLGANFPKSNHMATELLLIDMKSNENESEDELSPQELQKNQVEARAIATKIREMIDNKFPIYDKKLQQNRSIQYRDIVILSRAMTSAPDMEEAMKVQDIPFYASNNSGYFETTEVATMIALLKVIDNPYQDIPLAAVLRSPIVGLNEEELGQIRMAKKKGYFFDALLAYKDITVSAAADRISDFITQLNNWRELSIRENLTALIWQIYQETNFYEFVGGLPGGKQRQANLRALYDRANQYEKTAFRGLFRFVRFVERLEVRGDDLGTAKTLGEKEDVVRMMTIHASKGLEFPVVIISGLSKKFNMRDIYSKTLLDKDYGFASNYRDIEKMIVYPTIMQQAIKQKKSREMIAEEMRVLYVALTRAEEKLILTATVPDFEKTSKNWLQVSNQKETILPASIRAKAKCYLDWIGNTIIRHTSFKDLLCEERIQTLPTEMKLQIEIKTKEMFLTTELEEHKADNWLENVKAHEPVPVQSAYKDEIERFMNYKYKDVAATEIRAKQSVTELKRQFSLQDSWSDTSILKEFQKVSLDRPKFLQQNKLSATEIGTAMHTLMQAVSLTYKPSEKDLTSLLQSMQEKDILTEAQIKAINIKQIMGFFDSPLGETVLQKSDQVKREVPFSYLLPVAKLYKQSDLEEHVLIQGVVDSMIEEEDAITLIDYKTDKIEGRYANWEAAEKVMKERYQIQIKLYAEAIQAITGKKVSNAYLYFFDGQHICQINIEEGF.

A UvrD-like helicase ATP-binding domain is found at 12-482 (TLWTDDQWKA…IDLSQNFRSR (471 aa)). Residue 33–40 (AAAGSGKT) participates in ATP binding. In terms of domain architecture, UvrD-like helicase C-terminal spans 509 to 800 (AAELTLGANF…RMMTIHASKG (292 aa)).

It belongs to the helicase family. AddA subfamily. As to quaternary structure, heterodimer of AddA and AddB/RexB. Requires Mg(2+) as cofactor.

The enzyme catalyses Couples ATP hydrolysis with the unwinding of duplex DNA by translocating in the 3'-5' direction.. It carries out the reaction ATP + H2O = ADP + phosphate + H(+). Functionally, the heterodimer acts as both an ATP-dependent DNA helicase and an ATP-dependent, dual-direction single-stranded exonuclease. Recognizes the chi site generating a DNA molecule suitable for the initiation of homologous recombination. The AddA nuclease domain is required for chi fragment generation; this subunit has the helicase and 3' -&gt; 5' nuclease activities. This Listeria welshimeri serovar 6b (strain ATCC 35897 / DSM 20650 / CCUG 15529 / CIP 8149 / NCTC 11857 / SLCC 5334 / V8) protein is ATP-dependent helicase/nuclease subunit A.